We begin with the raw amino-acid sequence, 157 residues long: Endosomal/vacuolar adapter protein YPT35 (157 aa).

The PX domain occupies 43–157 (ITDVLVGDYH…SPVITHFILN (115 aa)).

Belongs to the YPT35 family.

Its subcellular location is the endosome membrane. It is found in the vacuole membrane. In terms of biological role, recruits the lipid transfer protein VPS13 to endosomal and vacuolar membranes. This Debaryomyces hansenii (strain ATCC 36239 / CBS 767 / BCRC 21394 / JCM 1990 / NBRC 0083 / IGC 2968) (Yeast) protein is Endosomal/vacuolar adapter protein YPT35 (YPT35).